Reading from the N-terminus, the 227-residue chain is ATP synthase F(0) complex subunit a (227 aa).

Helical transmembrane passes span 12–32 (PTYL…ILFP), 69–89 (WAVL…LGLL), 98–118 (QLSL…IIGM), 132–152 (EGTP…SLFI), 180–200 (FVLM…LFLL), and 202–222 (LLEI…LSLY).

This sequence belongs to the ATPase A chain family. Component of the ATP synthase complex composed at least of ATP5F1A/subunit alpha, ATP5F1B/subunit beta, ATP5MC1/subunit c (homooctomer), MT-ATP6/subunit a, MT-ATP8/subunit 8, ATP5ME/subunit e, ATP5MF/subunit f, ATP5MG/subunit g, ATP5MK/subunit k, ATP5MJ/subunit j, ATP5F1C/subunit gamma, ATP5F1D/subunit delta, ATP5F1E/subunit epsilon, ATP5PF/subunit F6, ATP5PB/subunit b, ATP5PD/subunit d, ATP5PO/subunit OSCP. ATP synthase complex consists of a soluble F(1) head domain (subunits alpha(3) and beta(3)) - the catalytic core - and a membrane F(0) domain - the membrane proton channel (subunits c, a, 8, e, f, g, k and j). These two domains are linked by a central stalk (subunits gamma, delta, and epsilon) rotating inside the F1 region and a stationary peripheral stalk (subunits F6, b, d, and OSCP). Interacts with DNAJC30; interaction is direct.

It is found in the mitochondrion inner membrane. It carries out the reaction H(+)(in) = H(+)(out). In terms of biological role, subunit a, of the mitochondrial membrane ATP synthase complex (F(1)F(0) ATP synthase or Complex V) that produces ATP from ADP in the presence of a proton gradient across the membrane which is generated by electron transport complexes of the respiratory chain. ATP synthase complex consist of a soluble F(1) head domain - the catalytic core - and a membrane F(1) domain - the membrane proton channel. These two domains are linked by a central stalk rotating inside the F(1) region and a stationary peripheral stalk. During catalysis, ATP synthesis in the catalytic domain of F(1) is coupled via a rotary mechanism of the central stalk subunits to proton translocation. With the subunit c (ATP5MC1), forms the proton-conducting channel in the F(0) domain, that contains two crucial half-channels (inlet and outlet) that facilitate proton movement from the mitochondrial intermembrane space (IMS) into the matrix. Protons are taken up via the inlet half-channel and released through the outlet half-channel, following a Grotthuss mechanism. In Salmo salar (Atlantic salmon), this protein is ATP synthase F(0) complex subunit a.